Here is a 552-residue protein sequence, read N- to C-terminus: Probable protein kinase UbiB (552 aa).

Residues 22–42 (LLPANLPLAATLLLLPFKLFP) traverse the membrane as a helical segment. The Protein kinase domain maps to 118 to 498 (SFNIEPLASA…QQLARQRNRR (381 aa)). ATP contacts are provided by residues 124 to 132 (LASASVAQV) and lysine 146. Aspartate 281 serves as the catalytic Proton acceptor. 2 helical membrane passes run 501–521 (ITLL…GEGI) and 530–550 (FGDI…AWLL).

It belongs to the ABC1 family. UbiB subfamily.

It localises to the cell inner membrane. Its pathway is cofactor biosynthesis; ubiquinone biosynthesis [regulation]. Its function is as follows. Is probably a protein kinase regulator of UbiI activity which is involved in aerobic coenzyme Q (ubiquinone) biosynthesis. This Cellvibrio japonicus (strain Ueda107) (Pseudomonas fluorescens subsp. cellulosa) protein is Probable protein kinase UbiB.